Reading from the N-terminus, the 238-residue chain is EKC/KEOPS complex subunit SPAP27G11.07c (238 aa).

Residues 20 to 238 (EKKLTVVKQG…MRGRKRTMIG (219 aa)) enclose the Protein kinase domain. Residues 26 to 34 (VKQGAEAIT) and Lys-48 contribute to the ATP site. The active-site Proton acceptor is Asp-148.

Belongs to the protein kinase superfamily. BUD32 family. In terms of assembly, component of the EKC/KEOPS complex composed of at least SPAP27G11.07c/BUD32, cgi121, gon7, pgp2 and SPAC4H3.13/PCC1; the whole complex dimerizes.

The protein localises to the cytoplasm. It localises to the nucleus. Its subcellular location is the chromosome. The protein resides in the telomere. The catalysed reaction is L-seryl-[protein] + ATP = O-phospho-L-seryl-[protein] + ADP + H(+). It catalyses the reaction L-threonyl-[protein] + ATP = O-phospho-L-threonyl-[protein] + ADP + H(+). In terms of biological role, component of the EKC/KEOPS complex that is required for the formation of a threonylcarbamoyl group on adenosine at position 37 (t(6)A37) in tRNAs that read codons beginning with adenine. The complex is probably involved in the transfer of the threonylcarbamoyl moiety of threonylcarbamoyl-AMP (TC-AMP) to the N6 group of A37. BUD32 has ATPase activity in the context of the EKC/KEOPS complex and likely plays a supporting role to the catalytic subunit KAE1. The EKC/KEOPS complex also promotes both telomere uncapping and telomere elongation. The complex is required for efficient recruitment of transcriptional coactivators. This is EKC/KEOPS complex subunit SPAP27G11.07c from Schizosaccharomyces pombe (strain 972 / ATCC 24843) (Fission yeast).